The chain runs to 317 residues: uncharacterized protein (317 aa).

Transmembrane regions (helical) follow at residues 18–38 (FWLI…LVII), 58–78 (IILS…GFIF), 92–112 (FLGS…WWSF), 130–150 (LFSA…AWAV), 159–179 (LFHI…KLLP), 202–222 (CSFL…LSTV), and 252–272 (NLLN…LLIA).

It belongs to the CbiQ family.

Its subcellular location is the cell membrane. This is an uncharacterized protein from Mycoplasma genitalium (strain ATCC 33530 / DSM 19775 / NCTC 10195 / G37) (Mycoplasmoides genitalium).